A 128-amino-acid polypeptide reads, in one-letter code: Nanos homolog 1 (128 aa).

The essential for its translational repressor activity stretch occupies residues 7–23 (FNSWSDYLGLSSLISRG). Residues 23 to 58 (GLQPREGGESPRPRWKASSPTPAEPLPSKAAEAHGH) are disordered. Residues 60–114 (GCGFCRSNREAQSLYSSHRLRAPDGRVLCPVLRGYTCPLCGANGDWAHTMRYCPL) form a Nanos-type zinc finger. 8 residues coordinate Zn(2+): Cys61, Cys64, His77, Cys88, Cys96, Cys99, His107, and Cys112. Short sequence motifs (C2HC) lie at residues 61–88 (CGFC…RVLC) and 96–112 (CPLC…MRYC).

This sequence belongs to the nanos family. In terms of assembly, interacts with ccnb1.

It localises to the cytoplasm. Its subcellular location is the perinuclear region. Acts as a translational repressor. Can mediate repression affecting different steps in the translation process: cap-driven, IRES-driven, polyadenylated RNAs or nonpolyadenylated RNAs. Essential for the development of primordial germ cells (PGCs) by ensuring their proper migration and survival. The protein is Nanos homolog 1 (nanos1) of Xenopus tropicalis (Western clawed frog).